The primary structure comprises 326 residues: Ribosomal RNA small subunit methyltransferase H (326 aa).

Residues 35 to 37 (GGY), Asp53, Phe80, Asp101, and Gln108 each bind S-adenosyl-L-methionine. The interval 260–306 (EGVSRHLPQASNAGAGNPPPSFQAVSRRAVKPLDAETRVNPRSRSAR) is disordered.

It belongs to the methyltransferase superfamily. RsmH family.

It is found in the cytoplasm. It catalyses the reaction cytidine(1402) in 16S rRNA + S-adenosyl-L-methionine = N(4)-methylcytidine(1402) in 16S rRNA + S-adenosyl-L-homocysteine + H(+). Its function is as follows. Specifically methylates the N4 position of cytidine in position 1402 (C1402) of 16S rRNA. The polypeptide is Ribosomal RNA small subunit methyltransferase H (Rhodospirillum rubrum (strain ATCC 11170 / ATH 1.1.1 / DSM 467 / LMG 4362 / NCIMB 8255 / S1)).